The chain runs to 295 residues: 4-hydroxy-tetrahydrodipicolinate synthase (295 aa).

Thr-47 contacts pyruvate. Catalysis depends on Tyr-135, which acts as the Proton donor/acceptor. The active-site Schiff-base intermediate with substrate is the Lys-163. Ile-206 contacts pyruvate.

The protein belongs to the DapA family. As to quaternary structure, homodimer.

It is found in the cytoplasm. It carries out the reaction L-aspartate 4-semialdehyde + pyruvate = (2S,4S)-4-hydroxy-2,3,4,5-tetrahydrodipicolinate + H2O + H(+). Its pathway is amino-acid biosynthesis; L-lysine biosynthesis via DAP pathway; (S)-tetrahydrodipicolinate from L-aspartate: step 3/4. Is not feedback inhibited by lysine. Its function is as follows. Catalyzes the condensation of (S)-aspartate-beta-semialdehyde [(S)-ASA] and pyruvate to 4-hydroxy-tetrahydrodipicolinate (HTPA). This Staphylococcus aureus (strain COL) protein is 4-hydroxy-tetrahydrodipicolinate synthase.